We begin with the raw amino-acid sequence, 506 residues long: ATP synthase subunit alpha (506 aa).

ATP is bound at residue 171–178 (GDRQTGKT).

This sequence belongs to the ATPase alpha/beta chains family. F-type ATPases have 2 components, CF(1) - the catalytic core - and CF(0) - the membrane proton channel. CF(1) has five subunits: alpha(3), beta(3), gamma(1), delta(1), epsilon(1). CF(0) has four main subunits: a, b, b' and c.

The protein localises to the cellular thylakoid membrane. It carries out the reaction ATP + H2O + 4 H(+)(in) = ADP + phosphate + 5 H(+)(out). Functionally, produces ATP from ADP in the presence of a proton gradient across the membrane. The alpha chain is a regulatory subunit. The chain is ATP synthase subunit alpha from Nostoc punctiforme (strain ATCC 29133 / PCC 73102).